We begin with the raw amino-acid sequence, 144 residues long: Putative pre-16S rRNA nuclease (144 aa).

Belongs to the YqgF nuclease family.

The protein resides in the cytoplasm. In terms of biological role, could be a nuclease involved in processing of the 5'-end of pre-16S rRNA. In Mycoplasma mobile (strain ATCC 43663 / 163K / NCTC 11711) (Mesomycoplasma mobile), this protein is Putative pre-16S rRNA nuclease.